A 527-amino-acid chain; its full sequence is Sensory neuron membrane protein 1 (527 aa).

Topologically, residues 1-10 (MQLQKPLKIG) are cytoplasmic. A helical transmembrane segment spans residues 11–31 (LGMMGAGLFGIIFGWVLFPVI). Topologically, residues 32–456 (LKSQLKKEMA…LKNQLFIPKR (425 aa)) are extracellular. 2 N-linked (GlcNAc...) asparagine glycosylation sites follow: asparagine 67 and asparagine 229. 3 disulfides stabilise this stretch: cysteine 268/cysteine 333, cysteine 297/cysteine 352, and cysteine 335/cysteine 341. A glycan (N-linked (GlcNAc...) asparagine) is linked at asparagine 440. A helical transmembrane segment spans residues 457-477 (IVSVVKWLLAGVGFVGLVGSL). Over 478-527 (VYQFKGKMINFALSPSSAPVTKVNPEINQQNQPKDISIIGESQNPPKVDM) the chain is Cytoplasmic.

Belongs to the CD36 family. Principal component of the olfactory cilia membrane. Localizes to the antennal tissue with two to three fold higher expression in males compared to females.

The protein localises to the cell membrane. In terms of biological role, plays an olfactory role that is not restricted to pheromone sensitivity. The protein is Sensory neuron membrane protein 1 of Ostrinia nubilalis (European corn borer).